The following is a 505-amino-acid chain: RNA-splicing ligase RtcB homolog (505 aa).

The Mn(2+) site is built by Asp-119, Cys-122, His-227, His-259, and His-353. 226–230 (NHYAE) is a GMP binding site. Residues 353–354 (HN), 402–405 (GGTM), Ser-409, 428–431 (HGAG), and Lys-504 each bind GMP. His-428 functions as the GMP-histidine intermediate in the catalytic mechanism.

Belongs to the RtcB family. As to quaternary structure, catalytic component of the tRNA-splicing ligase complex. Mn(2+) serves as cofactor.

The protein localises to the nucleus. It localises to the cytoplasm. The enzyme catalyses a 3'-end 3'-phospho-ribonucleotide-RNA + a 5'-end dephospho-ribonucleoside-RNA + GTP = a ribonucleotidyl-ribonucleotide-RNA + GMP + diphosphate. It catalyses the reaction a 3'-end 2',3'-cyclophospho-ribonucleotide-RNA + a 5'-end dephospho-ribonucleoside-RNA + GTP + H2O = a ribonucleotidyl-ribonucleotide-RNA + GMP + diphosphate + H(+). In terms of biological role, catalytic subunit of the tRNA-splicing ligase complex that acts by directly joining spliced tRNA halves to mature-sized tRNAs by incorporating the precursor-derived splice junction phosphate into the mature tRNA as a canonical 3',5'-phosphodiester. May act as an RNA ligase with broad substrate specificity, and may function toward other RNAs. In Danio rerio (Zebrafish), this protein is RNA-splicing ligase RtcB homolog.